The sequence spans 169 residues: Regulator of sigma D (169 aa).

The protein belongs to the Rsd/AlgQ family. In terms of assembly, interacts with RpoD.

It is found in the cytoplasm. In terms of biological role, binds RpoD and negatively regulates RpoD-mediated transcription activation by preventing the interaction between the primary sigma factor RpoD with the catalytic core of the RNA polymerase and with promoter DNA. May be involved in replacement of the RNA polymerase sigma subunit from RpoD to RpoS during the transition from exponential growth to the stationary phase. The chain is Regulator of sigma D from Yersinia pseudotuberculosis serotype O:1b (strain IP 31758).